A 460-amino-acid polypeptide reads, in one-letter code: Elongation factor 1-alpha (460 aa).

G2 carries the n,N,N-trimethylglycine modification. N6,N6-dimethyllysine; alternate is present on K3. Position 3 is an N6-methyllysine; alternate (K3). The tr-type G domain occupies 5 to 240; sequence KTHVNLVVIG…DAIEPPVRPS (236 aa). The segment at 14-21 is G1; sequence GHVDAGKS. 14–21 provides a ligand contact to GTP; sequence GHVDAGKS. K30 carries the N6-methyllysine modification. The interval 70–74 is G2; the sequence is GITID. K79 carries the post-translational modification N6,N6,N6-trimethyllysine. The interval 91 to 94 is G3; sequence DAPG. GTP is bound by residues 91-95 and 153-156; these read DAPGH and NKMD. Residues 153 to 156 form a G4 region; sequence NKMD. Positions 192 to 194 are G5; that stretch reads SGW. The residue at position 317 (K317) is an N6,N6-dimethyllysine; alternate. Residue K317 is modified to N6-methyllysine; alternate. Residue K391 is modified to N6-methyllysine.

It belongs to the TRAFAC class translation factor GTPase superfamily. Classic translation factor GTPase family. EF-Tu/EF-1A subfamily.

It is found in the cytoplasm. This protein promotes the GTP-dependent binding of aminoacyl-tRNA to the A-site of ribosomes during protein biosynthesis. This Yarrowia lipolytica (strain CLIB 122 / E 150) (Yeast) protein is Elongation factor 1-alpha (TEF).